The primary structure comprises 528 residues: Bifunctional dihydrofolate reductase-thymidylate synthase (528 aa).

Residues 1-20 (MASELLANPTNGSGITRPDP) are disordered. In terms of domain architecture, DHFR spans 23-200 (TYQVVVAATQ…IRYCFTTYVR (178 aa)). V27 contributes to the substrate binding site. NADP(+) is bound by residues A29 and 35-41 (GIGKDGK). Substrate is bound at residue D49. NADP(+) contacts are provided by residues 73–75 (RKT) and 94–97 (LTRS). Substrate is bound by residues I136, Y142, and T157. 137 to 144 (GGGQIYRE) is an NADP(+) binding site. A thymidylate synthase region spans residues 202–528 (RNSVAELTSQ…HQKIEMKMAV (327 aa)). R264 provides a ligand contact to dUMP. C409 is a catalytic residue. DUMP is bound by residues H410, 428-432 (QRSAD), N440, and 470-472 (HVY).

In the N-terminal section; belongs to the dihydrofolate reductase family. The protein in the C-terminal section; belongs to the thymidylate synthase family.

The enzyme catalyses (6S)-5,6,7,8-tetrahydrofolate + NADP(+) = 7,8-dihydrofolate + NADPH + H(+). The catalysed reaction is dUMP + (6R)-5,10-methylene-5,6,7,8-tetrahydrofolate = 7,8-dihydrofolate + dTMP. It participates in cofactor biosynthesis; tetrahydrofolate biosynthesis; 5,6,7,8-tetrahydrofolate from 7,8-dihydrofolate: step 1/1. In terms of biological role, bifunctional enzyme. Involved in de novo dTMP biosynthesis. Key enzyme in folate metabolism. Can play two different roles depending on the source of dihydrofolate: de novo synthesis of tetrahydrofolate or recycling of the dihydrofolate released as one of the end products of the TS catalyzed reaction. Catalyzes an essential reaction for de novo glycine and purine synthesis, DNA precursor synthesis, and for the conversion of dUMP to dTMP. This chain is Bifunctional dihydrofolate reductase-thymidylate synthase, found in Daucus carota (Wild carrot).